Consider the following 140-residue polypeptide: uncharacterized protein (140 aa).

Helical transmembrane passes span 33–53 and 59–79; these read LLYVFLFIIFANCVVDVKYYF and SLLFVYFFLTLIILLVSFMGF. Residues 89–104 are compositionally biased toward basic and acidic residues; sequence EAEPDYRKKQESKNQD. A disordered region spans residues 89-140; sequence EAEPDYRKKQESKNQDFLKSQSNEPLEYASSSAVELEKEKNTREGLTILESS. The span at 105–121 shows a compositional bias: polar residues; that stretch reads FLKSQSNEPLEYASSSA.

The protein resides in the membrane. This is an uncharacterized protein from Schizosaccharomyces pombe (strain 972 / ATCC 24843) (Fission yeast).